The sequence spans 337 residues: RNA 3'-terminal phosphate cyclase (337 aa).

ATP is bound by residues Q100 and 281 to 285 (YMGDQ). Catalysis depends on H306, which acts as the Tele-AMP-histidine intermediate.

It belongs to the RNA 3'-terminal cyclase family. Type 1 subfamily.

The protein localises to the cytoplasm. It catalyses the reaction a 3'-end 3'-phospho-ribonucleotide-RNA + ATP = a 3'-end 2',3'-cyclophospho-ribonucleotide-RNA + AMP + diphosphate. Catalyzes the conversion of 3'-phosphate to a 2',3'-cyclic phosphodiester at the end of RNA. The mechanism of action of the enzyme occurs in 3 steps: (A) adenylation of the enzyme by ATP; (B) transfer of adenylate to an RNA-N3'P to produce RNA-N3'PP5'A; (C) and attack of the adjacent 2'-hydroxyl on the 3'-phosphorus in the diester linkage to produce the cyclic end product. The biological role of this enzyme is unknown but it is likely to function in some aspects of cellular RNA processing. The chain is RNA 3'-terminal phosphate cyclase (rtcA) from Methanothermobacter thermautotrophicus (strain ATCC 29096 / DSM 1053 / JCM 10044 / NBRC 100330 / Delta H) (Methanobacterium thermoautotrophicum).